Here is a 370-residue protein sequence, read N- to C-terminus: 5-hydroxytryptamine receptor 5B (370 aa).

The segment at 1–36 (MEVSNLSGATPGIAFPPGPESCSDSPSSGRSMGSTP) is disordered. The Extracellular portion of the chain corresponds to 1-48 (MEVSNLSGATPGIAFPPGPESCSDSPSSGRSMGSTPGGLILSGREPPF). N-linked (GlcNAc...) asparagine glycosylation is present at Asn5. Residues 20–36 (ESCSDSPSSGRSMGSTP) are compositionally biased toward low complexity. The chain crosses the membrane as a helical span at residues 49 to 75 (SAFTVLVVTLLVLLIAATFLWNLLVLV). Over 76–88 (TILRVRAFHRVPH) the chain is Cytoplasmic. The chain crosses the membrane as a helical span at residues 89–115 (NLVASTAVSDVLVAALVMPLSLVSELS). The Extracellular portion of the chain corresponds to 116–127 (AGRRWQLGRSLC). An intrachain disulfide couples Cys127 to Cys205. The helical transmembrane segment at 128–150 (HVWISFDVLCCTASIWNVAAIAL) threads the bilayer. Asp134 provides a ligand contact to serotonin. At 151-168 (DRYWTITRHLQYTLRTRR) the chain is on the cytoplasmic side. Residues 169–189 (RASALMIAITWALSALIALAP) form a helical membrane-spanning segment. Residues 190-211 (LLFGWGEAYDARLQRCQVSQEP) are Extracellular-facing. Residues 212-233 (SYAVFSTCGAFYVPLAVVLFVY) traverse the membrane as a helical segment. The Cytoplasmic segment spans residues 234-300 (WKIYKAAKFR…QKEKRAAMMV (67 aa)). Residues 301–325 (GILIGVFVLCWIPFFLTELVSPLCA) traverse the membrane as a helical segment. The Extracellular portion of the chain corresponds to 326-327 (CS). The chain crosses the membrane as a helical span at residues 328–352 (LPPIWKSIFLWLGYSNSFFNPLIYT). At 353-370 (AFNKNYNNAFKSLFTKQR) the chain is on the cytoplasmic side.

The protein belongs to the G-protein coupled receptor 1 family. Brain; in the CA1 region of hippocampus, the medial habenula, and raphe nuclei.

The protein localises to the cell membrane. Functionally, G-protein coupled receptor for 5-hydroxytryptamine (serotonin), a biogenic hormone that functions as a neurotransmitter, a hormone and a mitogen. Also functions as a receptor for ergot alkaloid derivatives and other psychoactive substances. Ligand binding causes a conformation change that triggers signaling via guanine nucleotide-binding proteins (G proteins) and modulates the activity of downstream effectors. Htr5b is coupled to G(i)/G(o) G alpha proteins and mediates inhibitory neurotransmission: signaling inhibits adenylate cyclase activity and activates a phosphatidylinositol-calcium second messenger system that regulates the release of Ca(2+) ions from intracellular stores. The protein is 5-hydroxytryptamine receptor 5B of Rattus norvegicus (Rat).